The following is a 346-amino-acid chain: Phosphate acyltransferase (346 aa).

It belongs to the PlsX family. Homodimer. Probably interacts with PlsY.

It is found in the cytoplasm. The enzyme catalyses a fatty acyl-[ACP] + phosphate = an acyl phosphate + holo-[ACP]. It participates in lipid metabolism; phospholipid metabolism. In terms of biological role, catalyzes the reversible formation of acyl-phosphate (acyl-PO(4)) from acyl-[acyl-carrier-protein] (acyl-ACP). This enzyme utilizes acyl-ACP as fatty acyl donor, but not acyl-CoA. This is Phosphate acyltransferase from Brucella ovis (strain ATCC 25840 / 63/290 / NCTC 10512).